Here is a 446-residue protein sequence, read N- to C-terminus: 3-phosphoshikimate 1-carboxyvinyltransferase (446 aa).

Residues K21, S22, and R26 each coordinate 3-phosphoshikimate. K21 provides a ligand contact to phosphoenolpyruvate. 2 residues coordinate phosphoenolpyruvate: G92 and R120. S165, Q166, D308, and K335 together coordinate 3-phosphoshikimate. Q166 is a phosphoenolpyruvate binding site. D308 (proton acceptor) is an active-site residue. 3 residues coordinate phosphoenolpyruvate: R339, R380, and K406.

Belongs to the EPSP synthase family. Monomer.

It is found in the cytoplasm. The enzyme catalyses 3-phosphoshikimate + phosphoenolpyruvate = 5-O-(1-carboxyvinyl)-3-phosphoshikimate + phosphate. It participates in metabolic intermediate biosynthesis; chorismate biosynthesis; chorismate from D-erythrose 4-phosphate and phosphoenolpyruvate: step 6/7. Catalyzes the transfer of the enolpyruvyl moiety of phosphoenolpyruvate (PEP) to the 5-hydroxyl of shikimate-3-phosphate (S3P) to produce enolpyruvyl shikimate-3-phosphate and inorganic phosphate. This Chlamydia caviae (strain ATCC VR-813 / DSM 19441 / 03DC25 / GPIC) (Chlamydophila caviae) protein is 3-phosphoshikimate 1-carboxyvinyltransferase.